A 167-amino-acid polypeptide reads, in one-letter code: MALKTDIRGMIWRYPDYFVVGREQLRQFALSVKNRHPAHFSEDAAAELGHDAIIAPLTFATIFAKLVQLDFFRHVDIGMETLVIVQVDQRFVFSKPIKAGDKLWARMDIVSVDERFGADIVVTKNICTNDDGELVLEAYTTLMSQFNGDQSAKLRWDSESGQVVRTA.

The region spanning 21–124 (GREQLRQFAL…RFGADIVVTK (104 aa)) is the MaoC-like domain.

Belongs to the UPF0336 family.

This Mycolicibacterium paratuberculosis (strain ATCC BAA-968 / K-10) (Mycobacterium paratuberculosis) protein is UPF0336 protein MAP_4109.